The sequence spans 567 residues: Urease subunit alpha (567 aa).

The region spanning 129 to 567 (GGIDTHIHWI…LPMAQRYFLF (439 aa)) is the Urease domain. Residues H134, H136, and K217 each coordinate Ni(2+). K217 carries the post-translational modification N6-carboxylysine. H219 provides a ligand contact to substrate. Residues H246 and H272 each contribute to the Ni(2+) site. H320 functions as the Proton donor in the catalytic mechanism. D360 is a binding site for Ni(2+).

This sequence belongs to the metallo-dependent hydrolases superfamily. Urease alpha subunit family. As to quaternary structure, heterotrimer of UreA (gamma), UreB (beta) and UreC (alpha) subunits. Three heterotrimers associate to form the active enzyme. The cofactor is Ni cation. Post-translationally, carboxylation allows a single lysine to coordinate two nickel ions.

It localises to the cytoplasm. The catalysed reaction is urea + 2 H2O + H(+) = hydrogencarbonate + 2 NH4(+). Its pathway is nitrogen metabolism; urea degradation; CO(2) and NH(3) from urea (urease route): step 1/1. In Klebsiella pneumoniae (strain 342), this protein is Urease subunit alpha.